We begin with the raw amino-acid sequence, 346 residues long: Biotin synthase (346 aa).

The Radical SAM core domain maps to 36-265 (YFGRQVMLHR…KAEIRIGGGR (230 aa)). Residues Cys-54, Cys-58, and Cys-61 each coordinate [4Fe-4S] cluster. [2Fe-2S] cluster is bound by residues Cys-98, Cys-130, Cys-190, and Arg-260.

This sequence belongs to the radical SAM superfamily. Biotin synthase family. In terms of assembly, homodimer. Requires [4Fe-4S] cluster as cofactor. [2Fe-2S] cluster serves as cofactor.

It catalyses the reaction (4R,5S)-dethiobiotin + (sulfur carrier)-SH + 2 reduced [2Fe-2S]-[ferredoxin] + 2 S-adenosyl-L-methionine = (sulfur carrier)-H + biotin + 2 5'-deoxyadenosine + 2 L-methionine + 2 oxidized [2Fe-2S]-[ferredoxin]. It functions in the pathway cofactor biosynthesis; biotin biosynthesis; biotin from 7,8-diaminononanoate: step 2/2. In terms of biological role, catalyzes the conversion of dethiobiotin (DTB) to biotin by the insertion of a sulfur atom into dethiobiotin via a radical-based mechanism. This is Biotin synthase from Acaryochloris marina (strain MBIC 11017).